We begin with the raw amino-acid sequence, 101 residues long: Signal recognition particle 19 kDa protein (101 aa).

This sequence belongs to the SRP19 family. Part of the signal recognition particle protein translocation system, which is composed of SRP and FtsY. Archaeal SRP consists of a 7S RNA molecule of 300 nucleotides and two protein subunits: SRP54 and SRP19.

The protein localises to the cytoplasm. Its function is as follows. Involved in targeting and insertion of nascent membrane proteins into the cytoplasmic membrane. Binds directly to 7S RNA and mediates binding of the 54 kDa subunit of the SRP. This chain is Signal recognition particle 19 kDa protein, found in Methanosarcina acetivorans (strain ATCC 35395 / DSM 2834 / JCM 12185 / C2A).